Here is a 447-residue protein sequence, read N- to C-terminus: MSQSKADYINVIGAGLAGSEAAYQIAKRGIPVKLYEMRGVKATPQHKTTNFAELVCSNSFRGDSLTNAVGLLKEEMRRLDSIIMRNGEAHRVPAGGAMAVDREGYAEAVTAEIESHPLIEVIRKEITEIPDDAITVIASGPLTSDALAEKIHELNGGDGFYFYDAAAPIVDKATIDMNKVYLKSRYDKGEAAYLNCPMTKEEFMAFYEALTTAEEAPLNSFEKEKYFEGCMPIEVMAKRGIKTMLYGPMKPVGLEYPEDYMGPRDGDFKTPYAVVQLRQDNAAGSLYNIVGFQTHLKWGEQKRVFQMIPGLENAEFVRYGVMHRNSYMDSPNLLKQTFQSKSNPNLFFAGQMTGVEGYVESAASGLVAGINAARLFKGEDEVIFPHTTAIGSLPYYVTHAESKHFQPMNVNFGIIKELEGPRIRDKKERYEKIAERSLKDLQTFIDA.

Residue 13–18 participates in FAD binding; that stretch reads GAGLAG.

The protein belongs to the MnmG family. TrmFO subfamily. FAD serves as cofactor.

The protein resides in the cytoplasm. It catalyses the reaction uridine(54) in tRNA + (6R)-5,10-methylene-5,6,7,8-tetrahydrofolate + NADH + H(+) = 5-methyluridine(54) in tRNA + (6S)-5,6,7,8-tetrahydrofolate + NAD(+). The enzyme catalyses uridine(54) in tRNA + (6R)-5,10-methylene-5,6,7,8-tetrahydrofolate + NADPH + H(+) = 5-methyluridine(54) in tRNA + (6S)-5,6,7,8-tetrahydrofolate + NADP(+). Catalyzes the folate-dependent formation of 5-methyl-uridine at position 54 (M-5-U54) in all tRNAs. This is Methylenetetrahydrofolate--tRNA-(uracil-5-)-methyltransferase TrmFO from Streptococcus thermophilus (strain ATCC BAA-250 / LMG 18311).